A 159-amino-acid chain; its full sequence is Odorant-binding protein (159 aa).

Belongs to the calycin superfamily. Lipocalin family. As to quaternary structure, homodimer.

Its subcellular location is the secreted. Its function is as follows. This protein binds a wide variety of chemical odorants. This Bos taurus (Bovine) protein is Odorant-binding protein.